An 81-amino-acid polypeptide reads, in one-letter code: Large ribosomal subunit protein bL31 (81 aa).

Zn(2+) is bound by residues cysteine 16, cysteine 18, cysteine 36, and cysteine 39.

Belongs to the bacterial ribosomal protein bL31 family. Type A subfamily. Part of the 50S ribosomal subunit. Zn(2+) is required as a cofactor.

Its function is as follows. Binds the 23S rRNA. This is Large ribosomal subunit protein bL31 from Rhodopirellula baltica (strain DSM 10527 / NCIMB 13988 / SH1).